Reading from the N-terminus, the 202-residue chain is MLNYKLILLFSSFLQLISFSGFMICCLTSPIIRNWGLAQAAGVSYGTFGYCKTLNSFSCSRVRLIYNTSKEILPGPSLERWWLSPKARHTIGGLLISIPVATCLTFISFALPLVIIFLFQTGGTNVSLITSNAILHILTLLSTIFACTVILLLCMHRDPVTISSLYDLVWLANCSLFPLLVIGVHFLSFRFDTSAQSDRKHS.

Residues 1-18 (MLNYKLILLFSSFLQLIS) form the signal peptide. 3 consecutive transmembrane segments (helical) span residues 91 to 107 (IGGL…LTFI), 137 to 155 (ILTL…LLCM), and 168 to 189 (LVWL…FLSF).

It localises to the membrane. In Saccharomyces cerevisiae (strain ATCC 204508 / S288c) (Baker's yeast), this protein is Protein DCV1 (DCV1).